A 146-amino-acid chain; its full sequence is Transcriptional regulator MraZ (146 aa).

2 SpoVT-AbrB domains span residues 9–55 (ASAL…PRPA) and 81–124 (AMDV…DVQR).

It belongs to the MraZ family. In terms of assembly, forms oligomers.

The protein resides in the cytoplasm. It is found in the nucleoid. In Methylibium petroleiphilum (strain ATCC BAA-1232 / LMG 22953 / PM1), this protein is Transcriptional regulator MraZ.